The following is a 106-amino-acid chain: MIITTTPTIDGHQITEYKGLVFGEVVSGANFIRDFFASITDVIGGRSGAYESKLNSARQEALAELEKEAKRVGANAVVGVSMEYQSMGGDKGMFIVVATGTAVVIR.

Belongs to the UPF0145 family.

This is UPF0145 protein APL_0465 from Actinobacillus pleuropneumoniae serotype 5b (strain L20).